The chain runs to 976 residues: Probable basic-leucine zipper transcription factor Q (976 aa).

Coiled coils occupy residues 57–110 (AIDS…QYQQ) and 136–287 (QQQQ…QQQQ). Positions 104-128 (YQQQYQQPYTTPSPPDQIDYNQQLS) are disordered. 2 stretches are compositionally biased toward polar residues: residues 374 to 385 (TNFNGTNNSTPN) and 393 to 411 (KLSS…SPPS). A disordered region spans residues 374-499 (TNFNGTNNST…PIDSNGDFDL (126 aa)). 2 stretches are compositionally biased toward low complexity: residues 420 to 468 (PKNN…FNNN) and 476 to 490 (STTT…MTSP). The bZIP domain maps to 504-567 (EKKKSISRIN…GVEVMRPEPE (64 aa)). The tract at residues 505–507 (KKK) is basic motif. Residues 509 to 516 (ISRINQNL) form a leucine-zipper region. The segment covering 855 to 938 (ENQSNNFGNN…VNSNNNNFNN (84 aa)) has biased composition (low complexity). A disordered region spans residues 855-957 (ENQSNNFGNN…SADAIPYPST (103 aa)).

Belongs to the bZIP family.

The protein resides in the nucleus. Functionally, probable transcriptional regulator. The chain is Probable basic-leucine zipper transcription factor Q (bzpQ) from Dictyostelium discoideum (Social amoeba).